A 61-amino-acid polypeptide reads, in one-letter code: MDIESEVPVVGKQMLAGNRGKQKTRRSVAKDAIRKPASDSTNGGNWVNVADKIEVHIHFNF.

Residues Met1–Asn45 are disordered. Residues Gly17–Lys35 form an RNA-binding region. The segment covering Val28–Ala37 has biased composition (basic and acidic residues).

It belongs to the carmovirus double gene block protein 1 family. Homodimer.

Functionally, cell-to-cell movement. Displays RNA-binding activity. The polypeptide is Double gene block protein 1 (Carnation mottle virus (CarMV)).